A 187-amino-acid polypeptide reads, in one-letter code: Rusticyanin (187 aa).

Positions Met1–Ala32 are cleaved as a signal peptide. Residues Ser85 to Lys187 form the Plastocyanin-like domain. Cu cation contacts are provided by His117, Cys170, His175, and Met180.

As to quaternary structure, monomer. Requires Cu cation as cofactor.

It localises to the periplasm. In terms of biological role, electron carrier from cytochrome c552 to the A-type oxidase. The protein is Rusticyanin (rus) of Acidithiobacillus ferrooxidans (strain ATCC 23270 / DSM 14882 / CIP 104768 / NCIMB 8455) (Ferrobacillus ferrooxidans (strain ATCC 23270)).